Consider the following 237-residue polypeptide: MGMGMEKGMTAYEAARERTVEENKRKMEALNLRHLSAAIAVAPKTPSPMKQKRRRIIEAAVVAPSPPRRSRRLANLPEVKYAEVAPDGAERMKRSPRKAIDSIYLATRGSISMEARLEAARKAEELESQLDPEFPSFVKPMLHSHVVRGFWLGLPRHFCETYLPKHDAIVTLLDEKDEQFDTNYLAYKNGLSGGWAGFALDHGLLDGDATVFQLVKPTTFKVHIIRATVDDGNEVTK.

The TF-B3 DNA-binding region spans 137–228 (FVKPMLHSHV…TFKVHIIRAT (92 aa)).

The protein localises to the nucleus. The chain is B3 domain-containing protein Os03g0184500 from Oryza sativa subsp. japonica (Rice).